Consider the following 240-residue polypeptide: Small ribosomal subunit protein uS3 (240 aa).

The KH type-2 domain maps to 39 to 109 (IRQYIEKTLN…QIRVNVIEVP (71 aa)). A disordered region spans residues 219–240 (APPSQPRRKSRRQQFDDRSQDG). Over residues 231–240 (QQFDDRSQDG) the composition is skewed to basic and acidic residues.

Belongs to the universal ribosomal protein uS3 family. As to quaternary structure, part of the 30S ribosomal subunit. Forms a tight complex with proteins S10 and S14.

Binds the lower part of the 30S subunit head. Binds mRNA in the 70S ribosome, positioning it for translation. This is Small ribosomal subunit protein uS3 from Synechocystis sp. (strain ATCC 27184 / PCC 6803 / Kazusa).